Consider the following 853-residue polypeptide: Stachyose synthase (853 aa).

Residues 1–11 (MAPPLNSTTSN) constitute a propeptide that is removed on maturation.

This sequence belongs to the glycosyl hydrolases 36 family.

The protein localises to the cytoplasm. The catalysed reaction is alpha-D-galactosyl-(1-&gt;3)-1D-myo-inositol + raffinose = stachyose + myo-inositol. The protein operates within glycan metabolism; stachyose biosynthesis; stachyose from raffinose: step 1/1. Functionally, catalyzes stachyose synthesis by transfer of a galactosyl moiety from galactinol to raffinose. Also catalyzes verbascose synthesis by galactosyl transfer from galactinol to stachyose or from one stachyose molecule to another. Oligosaccharides of the raffinose family play a protective role in maturation drying of seeds. They may act as cryoprotectants in frost-hardy plants. This chain is Stachyose synthase (STS1), found in Pisum sativum (Garden pea).